Here is a 227-residue protein sequence, read N- to C-terminus: PKHD-type hydroxylase GDI1238/Gdia_1949 (227 aa).

One can recognise a Fe2OG dioxygenase domain in the interval 78–178; the sequence is RVVPPLFNRY…RLASFFWTQS (101 aa). Positions 96, 98, and 159 each coordinate Fe cation. Arg-169 contacts 2-oxoglutarate.

The cofactor is Fe(2+). L-ascorbate serves as cofactor.

The sequence is that of PKHD-type hydroxylase GDI1238/Gdia_1949 from Gluconacetobacter diazotrophicus (strain ATCC 49037 / DSM 5601 / CCUG 37298 / CIP 103539 / LMG 7603 / PAl5).